A 556-amino-acid chain; its full sequence is Phenylalanine--tRNA ligase beta subunit (556 aa).

A B5 domain is found at 274 to 349; that stretch reads HEPEEMEVDL…ITLGLNKIGY (76 aa). Residues Asp-327, Asp-333, Glu-336, and Glu-337 each contribute to the Mg(2+) site.

Belongs to the phenylalanyl-tRNA synthetase beta subunit family. Type 2 subfamily. In terms of assembly, tetramer of two alpha and two beta subunits. Mg(2+) is required as a cofactor.

The protein localises to the cytoplasm. It catalyses the reaction tRNA(Phe) + L-phenylalanine + ATP = L-phenylalanyl-tRNA(Phe) + AMP + diphosphate + H(+). The protein is Phenylalanine--tRNA ligase beta subunit of Korarchaeum cryptofilum (strain OPF8).